The primary structure comprises 614 residues: Heat shock protein SSB1 (614 aa).

The segment at 1–392 (MSTEVYDGAI…ILSGKATSAE (392 aa)) is nucleotide binding domain (NBD). ATP is bound by residues 16-18 (TTY), lysine 74, 206-208 (GGT), 272-279 (ERAKRTLS), and glycine 343. The tract at residues 393–403 (TADLLLLDVVP) is inter-domain linker. Residues 404–614 (LSLGVAMEGN…RAVTKAMSSR (211 aa)) form a substrate binding domain (SBD) region. The tract at residues 517-613 (TSEIENMISE…KRAVTKAMSS (97 aa)) is lid domain (SBDalpha). A Nuclear export signal motif is present at residues 575–583 (IENTMSEAM).

It belongs to the heat shock protein 70 family. Interacts with HAT1 in starvation conditions.

The protein resides in the nucleus. It localises to the cytoplasm. The catalysed reaction is ATP + H2O = ADP + phosphate + H(+). In terms of biological role, chaperone that interacts with the histone acetyltransferase HAT1 and mediates its translocation from the nucleus to the cytoplasm during germination and starvation conditions. Within the cytoplasm, HAT1 regulates autophagy via acetylation of the autophagy-related proteins ATG3 and ATG9. The chain is Heat shock protein SSB1 from Pyricularia oryzae (strain 70-15 / ATCC MYA-4617 / FGSC 8958) (Rice blast fungus).